A 162-amino-acid polypeptide reads, in one-letter code: MLDTWVWGTLTLTFGLLSSLQGVSFNETANTCDILNCPKGFTCCVKECCPERKVWDPANDRFRFLVILACIIFPILFICALVSLFCPNCTELQHDVRRVDHQTPIEPPSIAPLESIWVTSLDPPPPYSQVVQMTPPTEPPPPYSLRPEGPAGQMRGRAYATL.

Positions 1–22 are cleaved as a signal peptide; the sequence is MLDTWVWGTLTLTFGLLSSLQG. Residues 23–63 lie on the Extracellular side of the membrane; the sequence is VSFNETANTCDILNCPKGFTCCVKECCPERKVWDPANDRFR. The helical transmembrane segment at 64–84 threads the bilayer; the sequence is FLVILACIIFPILFICALVSL. Residues 85-162 lie on the Cytoplasmic side of the membrane; it reads FCPNCTELQH…QMRGRAYATL (78 aa). Residues 134 to 162 are disordered; sequence TPPTEPPPPYSLRPEGPAGQMRGRAYATL.

The protein resides in the membrane. This is Transmembrane protein 92 (Tmem92) from Mus musculus (Mouse).